The following is a 148-amino-acid chain: Ribonuclease H (148 aa).

The region spanning 3–144 is the RNase H type-1 domain; the sequence is DKEQVVIYTD…ADQLANRGVA (142 aa). Positions 12, 50, 72, and 136 each coordinate Mg(2+). The segment at 125–148 is disordered; the sequence is GHTGDPGNERADQLANRGVAELPR.

The protein belongs to the RNase H family. As to quaternary structure, monomer. Mg(2+) is required as a cofactor.

It is found in the cytoplasm. It catalyses the reaction Endonucleolytic cleavage to 5'-phosphomonoester.. Its function is as follows. Endonuclease that specifically degrades the RNA of RNA-DNA hybrids. The sequence is that of Ribonuclease H from Pseudomonas paraeruginosa (strain DSM 24068 / PA7) (Pseudomonas aeruginosa (strain PA7)).